Here is a 337-residue protein sequence, read N- to C-terminus: Ribosomal RNA small subunit methyltransferase H (337 aa).

Residues 45 to 47 (GGH), Asp-64, Phe-91, Asp-120, and Gln-127 contribute to the S-adenosyl-L-methionine site.

It belongs to the methyltransferase superfamily. RsmH family.

Its subcellular location is the cytoplasm. It carries out the reaction cytidine(1402) in 16S rRNA + S-adenosyl-L-methionine = N(4)-methylcytidine(1402) in 16S rRNA + S-adenosyl-L-homocysteine + H(+). Specifically methylates the N4 position of cytidine in position 1402 (C1402) of 16S rRNA. The polypeptide is Ribosomal RNA small subunit methyltransferase H (Corynebacterium glutamicum (strain R)).